A 172-amino-acid chain; its full sequence is Co-chaperone protein HscB homolog (172 aa).

The 73-residue stretch at 2–74 folds into the J domain; that stretch reads NYFELFGLVE…LRRAEYLLSL (73 aa).

The protein belongs to the HscB family. Interacts with HscA and stimulates its ATPase activity.

Co-chaperone involved in the maturation of iron-sulfur cluster-containing proteins. Seems to help targeting proteins to be folded toward HscA. This chain is Co-chaperone protein HscB homolog, found in Aeromonas hydrophila subsp. hydrophila (strain ATCC 7966 / DSM 30187 / BCRC 13018 / CCUG 14551 / JCM 1027 / KCTC 2358 / NCIMB 9240 / NCTC 8049).